Reading from the N-terminus, the 492-residue chain is Homoserine O-acetyltransferase (492 aa).

The 306-residue stretch at 47–352 folds into the AB hydrolase-1 domain; the sequence is NAILVFHALS…KSIYGHDAFL (306 aa). Catalysis depends on S152, which acts as the Nucleophile. R221 provides a ligand contact to substrate. Active-site residues include D315 and H348. Position 349 (D349) interacts with substrate. CBS domains lie at 375–431 and 440–492; these read MTKN…ENSI and MTKN…TITI.

It belongs to the AB hydrolase superfamily. MetX family. As to quaternary structure, homodimer.

It is found in the cytoplasm. It catalyses the reaction L-homoserine + acetyl-CoA = O-acetyl-L-homoserine + CoA. It functions in the pathway amino-acid biosynthesis; L-methionine biosynthesis via de novo pathway; O-acetyl-L-homoserine from L-homoserine: step 1/1. Functionally, transfers an acetyl group from acetyl-CoA to L-homoserine, forming acetyl-L-homoserine. The protein is Homoserine O-acetyltransferase of Methanococcus vannielii (strain ATCC 35089 / DSM 1224 / JCM 13029 / OCM 148 / SB).